The chain runs to 449 residues: Protein cortex (449 aa).

WD repeat units follow at residues 108-148, 149-188, 198-237, 283-327, 345-382, and 386-425; these read TYSY…ISQG, YAEY…KIDS, NRNC…ISWR, DSDW…VRDT, TGEL…DQWG, and SGLD…KKMK. The D-box motif lies at 386–397; that stretch reads SGLDRVRTMVFS.

The protein belongs to the WD repeat CORT family.

It localises to the cytoplasm. In terms of biological role, controls wing pigmentation patterning by regulating scale cell development, thereby playing a key role in mimicry and crypsis. Probably acts as an activator of the anaphase promoting complex/cyclosome (APC/C) that promotes the ubiquitin ligase activity and substrate specificity of the APC/C. This is Protein cortex from Heliconius erato (Crimson patched longwing butterfly).